The following is a 401-amino-acid chain: ATP phosphoribosyltransferase regulatory subunit (401 aa).

It belongs to the class-II aminoacyl-tRNA synthetase family. HisZ subfamily. Heteromultimer composed of HisG and HisZ subunits.

Its subcellular location is the cytoplasm. It functions in the pathway amino-acid biosynthesis; L-histidine biosynthesis; L-histidine from 5-phospho-alpha-D-ribose 1-diphosphate: step 1/9. In terms of biological role, required for the first step of histidine biosynthesis. May allow the feedback regulation of ATP phosphoribosyltransferase activity by histidine. The chain is ATP phosphoribosyltransferase regulatory subunit from Cyanothece sp. (strain PCC 7425 / ATCC 29141).